The sequence spans 768 residues: Telomere repeats-binding bouquet formation protein 1 (768 aa).

ARM repeat units follow at residues 101–145 and 341–384; these read ELFQ…REVG and NGLP…GQNS. Residues 399-448 are a coiled coil; sequence ETLREHWKAAKEILCRIKQFEKGGKEEKQQNRSGHYKDNTPSMKVNIQTN. 2 stretches are compositionally biased toward basic and acidic residues: residues 422–436 and 461–475; these read GKEE…HYKD and RAED…ELRS. Disordered regions lie at residues 422–441 and 454–475; these read GKEE…TPSM and ADST…ELRS. The segment at 524 to 700 is interaction with TERF1; the sequence is QNLDKEKTFD…EAMERRSPVP (177 aa). At T648 the chain carries Phosphothreonine. The Myb-like domain maps to 707 to 760; it reads KKRRIRKDFTKEEVNYLFHGVKTMGNHWNSILWSFPFQKGRRAVDLAHKYHRLI.

It belongs to the TERB1 family. Component of the MAJIN-TERB1-TERB2 complex, composed of MAJIN, TERB1 and TERB2. Interacts with TERF1, STAG3 and SUN1. Interacts (via Myb-like domain) with the cohesin complex; probably mediated via interaction with STAG3. In terms of processing, phosphorylated by CDK. Phosphorylation by CDK takes place in late prophase when the cap exchange is prominent. is important for the stabilization of telomere attachment but dispenable for the cap exchange. As to expression, expressed in testis and fetal oocytes.

The protein localises to the chromosome. It is found in the telomere. Its subcellular location is the nucleus inner membrane. Its function is as follows. Meiosis-specific telomere-associated protein involved in meiotic telomere attachment to the nucleus inner membrane, a crucial step for homologous pairing and synapsis. Component of the MAJIN-TERB1-TERB2 complex, which promotes telomere cap exchange by mediating attachment of telomeric DNA to the inner nuclear membrane and replacement of the protective cap of telomeric chromosomes: in early meiosis, the MAJIN-TERB1-TERB2 complex associates with telomeric DNA and the shelterin/telosome complex. During prophase, the complex matures and promotes release of the shelterin/telosome complex from telomeric DNA. In the MAJIN-TERB1-TERB2 complex, TERB1 probably mediates association with the shelterin/telosome complex via interaction with TERF1, promoting priming telomeric DNA attachment'. Promotes telomere association with the nuclear envelope and deposition of the SUN-KASH/LINC complex. Also recruits cohesin to telomeres to develop structural rigidity. The chain is Telomere repeats-binding bouquet formation protein 1 from Mus musculus (Mouse).